The sequence spans 202 residues: 3-isopropylmalate dehydratase small subunit (202 aa).

Belongs to the LeuD family. LeuD type 1 subfamily. As to quaternary structure, heterodimer of LeuC and LeuD.

The enzyme catalyses (2R,3S)-3-isopropylmalate = (2S)-2-isopropylmalate. Its pathway is amino-acid biosynthesis; L-leucine biosynthesis; L-leucine from 3-methyl-2-oxobutanoate: step 2/4. Its function is as follows. Catalyzes the isomerization between 2-isopropylmalate and 3-isopropylmalate, via the formation of 2-isopropylmaleate. The protein is 3-isopropylmalate dehydratase small subunit of Nocardia farcinica (strain IFM 10152).